A 251-amino-acid chain; its full sequence is Ditrans,polycis-undecaprenyl-diphosphate synthase ((2E,6E)-farnesyl-diphosphate specific) (251 aa).

The active site involves Asp19. Asp19 is a binding site for Mg(2+). Residues 20 to 23 (GNNR), Trp24, His36, and 64 to 66 (SSE) contribute to the substrate site. Asn67 (proton acceptor) is an active-site residue. Substrate-binding positions include Trp68, Arg70, Arg187, and 193–195 (RIS). Glu206 serves as a coordination point for Mg(2+).

The protein belongs to the UPP synthase family. Homodimer. Mg(2+) serves as cofactor.

The catalysed reaction is 8 isopentenyl diphosphate + (2E,6E)-farnesyl diphosphate = di-trans,octa-cis-undecaprenyl diphosphate + 8 diphosphate. Its function is as follows. Catalyzes the sequential condensation of isopentenyl diphosphate (IPP) with (2E,6E)-farnesyl diphosphate (E,E-FPP) to yield (2Z,6Z,10Z,14Z,18Z,22Z,26Z,30Z,34E,38E)-undecaprenyl diphosphate (di-trans,octa-cis-UPP). UPP is the precursor of glycosyl carrier lipid in the biosynthesis of bacterial cell wall polysaccharide components such as peptidoglycan and lipopolysaccharide. In Pseudomonas aeruginosa (strain ATCC 15692 / DSM 22644 / CIP 104116 / JCM 14847 / LMG 12228 / 1C / PRS 101 / PAO1), this protein is Ditrans,polycis-undecaprenyl-diphosphate synthase ((2E,6E)-farnesyl-diphosphate specific).